Here is a 369-residue protein sequence, read N- to C-terminus: Signal recognition particle receptor FtsY (369 aa).

The span at 20-42 shows a compositional bias: basic and acidic residues; sequence GEENKKEPETRQTDQLESKKEET. The interval 20–58 is disordered; sequence GEENKKEPETRQTDQLESKKEETIQQQQNVQQPQAENKI. Residues 44 to 53 show a composition bias toward low complexity; the sequence is QQQQNVQQPQ. GTP-binding positions include 180–187, 262–266, and 320–323; these read GVNGVGKT, DTAGR, and TKVD.

Belongs to the GTP-binding SRP family. FtsY subfamily. As to quaternary structure, part of the signal recognition particle protein translocation system, which is composed of SRP and FtsY.

The protein resides in the cell membrane. It is found in the cytoplasm. The catalysed reaction is GTP + H2O = GDP + phosphate + H(+). Involved in targeting and insertion of nascent membrane proteins into the cytoplasmic membrane. Acts as a receptor for the complex formed by the signal recognition particle (SRP) and the ribosome-nascent chain (RNC). This Sulfolobus acidocaldarius (strain ATCC 33909 / DSM 639 / JCM 8929 / NBRC 15157 / NCIMB 11770) protein is Signal recognition particle receptor FtsY.